The primary structure comprises 81 residues: A-kinase anchor protein 7 isoform alpha (81 aa).

Gly2 is lipidated: N-myristoyl glycine. A required for membrane localization region spans residues 2–11 (GQLCCFPFAR). Residues Cys5 and Cys6 are each lipidated (S-palmitoyl cysteine). Residues 29–42 (LVRLSKRLVENAVL) are RII-binding. Positions 49-81 (LEETQNKKQPGEGNSTKAEEGDRNGDGSDNNRK) are disordered. A compositionally biased stretch (basic and acidic residues) spans 65-81 (KAEEGDRNGDGSDNNRK).

Binds cAMP-dependent protein kinase (PKA). Interacts with PRKCA; only the cytoplasmic form is capable of interacting with PRKCA.

The protein resides in the lateral cell membrane. In terms of biological role, targets the cAMP-dependent protein kinase (PKA) to the plasma membrane, and permits functional coupling to the L-type calcium channel. The membrane-associated form reduces epithelial sodium channel (ENaC) activity, whereas the free cytoplasmic form may negatively regulate ENaC channel feedback inhibition by intracellular sodium. This is A-kinase anchor protein 7 isoform alpha (Akap7) from Mus musculus (Mouse).